The chain runs to 293 residues: Protease HtpX (293 aa).

The next 2 helical transmembrane spans lie at 4–24 (IALF…VLSL) and 34–54 (GLLI…LLMS). His139 serves as a coordination point for Zn(2+). Residue Glu140 is part of the active site. His143 contributes to the Zn(2+) binding site. 2 helical membrane passes run 158 to 178 (VVNT…AGFL) and 193 to 213 (LIYF…ASII). Residue Glu222 coordinates Zn(2+).

It belongs to the peptidase M48B family. The cofactor is Zn(2+).

The protein resides in the cell inner membrane. The protein is Protease HtpX of Salmonella agona (strain SL483).